A 256-amino-acid chain; its full sequence is MLKIVILLSAVVCALGGTVPEGLLPQLDGRIVGGSATTISSFPWQISLQRSGSHSCGGSIYSANIIVTAAHCLQSVSASVLQVRAGSTYWSSGGVVAKVSSFKNHEGYNANTMVNDIAVIRLSSSLSFSSSIKAISLATYNPANGASAAVSGWGTQSSGSSSIPSQLQYVNVNIVSQSQCASSTYGYGSQIRNTMICAAASGKDACQGDSGGPLVSGGVLVGVVSWGYGCAYSNYPGVYADVAVLRSWVVSTANSI.

An N-terminal signal peptide occupies residues 1 to 22 (MLKIVILLSAVVCALGGTVPEG). The propeptide at 23–30 (LLPQLDGR) is activation peptide. Positions 31 to 254 (IVGGSATTIS…LRSWVVSTAN (224 aa)) constitute a Peptidase S1 domain. Cys-56 and Cys-72 form a disulfide bridge. Residues His-71 and Asp-116 each act as charge relay system in the active site. 2 cysteine pairs are disulfide-bonded: Cys-180–Cys-197 and Cys-206–Cys-230. Ser-210 serves as the catalytic Charge relay system.

This sequence belongs to the peptidase S1 family. In terms of tissue distribution, synthesized in the midgut of both larvae and adults, primarily in the ventriculus and gastric caeca.

It localises to the secreted. Its subcellular location is the extracellular space. It carries out the reaction Preferential cleavage: Arg-|-Xaa, Lys-|-Xaa.. The sequence is that of Trypsin alpha (alphaTry) from Drosophila melanogaster (Fruit fly).